The primary structure comprises 129 residues: Sulfurtransferase TusD (129 aa).

The Cysteine persulfide intermediate role is filled by Cys-79.

It belongs to the DsrE/TusD family. Heterohexamer, formed by a dimer of trimers. The hexameric TusBCD complex contains 2 copies each of TusB, TusC and TusD. The TusBCD complex interacts with TusE.

The protein resides in the cytoplasm. Its function is as follows. Part of a sulfur-relay system required for 2-thiolation of 5-methylaminomethyl-2-thiouridine (mnm(5)s(2)U) at tRNA wobble positions. Accepts sulfur from TusA and transfers it in turn to TusE. This Pectobacterium carotovorum subsp. carotovorum (strain PC1) protein is Sulfurtransferase TusD.